Reading from the N-terminus, the 234-residue chain is Large ribosomal subunit protein bL25 (234 aa).

This sequence belongs to the bacterial ribosomal protein bL25 family. CTC subfamily. In terms of assembly, part of the 50S ribosomal subunit; part of the 5S rRNA/L5/L18/L25 subcomplex. Contacts the 5S rRNA. Binds to the 5S rRNA independently of L5 and L18.

Its function is as follows. This is one of the proteins that binds to the 5S RNA in the ribosome where it forms part of the central protuberance. The chain is Large ribosomal subunit protein bL25 from Rhodopseudomonas palustris (strain BisA53).